The chain runs to 246 residues: Dihydroorotate dehydrogenase B (NAD(+)), electron transfer subunit (246 aa).

An FAD-binding FR-type domain is found at 3 to 97 (EKYTVEKVYE…TGPLGNGFNV (95 aa)). FAD-binding positions include 50–53 (RPIS) and 72–73 (GT). [2Fe-2S] cluster is bound by residues C211, C216, C219, and C231.

Belongs to the PyrK family. As to quaternary structure, heterotetramer of 2 PyrK and 2 PyrD type B subunits. [2Fe-2S] cluster serves as cofactor. Requires FAD as cofactor.

The protein operates within pyrimidine metabolism; UMP biosynthesis via de novo pathway; orotate from (S)-dihydroorotate (NAD(+) route): step 1/1. Responsible for channeling the electrons from the oxidation of dihydroorotate from the FMN redox center in the PyrD type B subunit to the ultimate electron acceptor NAD(+). The polypeptide is Dihydroorotate dehydrogenase B (NAD(+)), electron transfer subunit (Clostridium acetobutylicum (strain ATCC 824 / DSM 792 / JCM 1419 / IAM 19013 / LMG 5710 / NBRC 13948 / NRRL B-527 / VKM B-1787 / 2291 / W)).